We begin with the raw amino-acid sequence, 495 residues long: Probable aspartic-type endopeptidase OPSB (495 aa).

An N-terminal signal peptide occupies residues 1-19 (MRGDSFIWSLATAIPLLST). The Peptidase A1 domain occupies 73–408 (YFCNLTLGTP…DLDNNEISIA (336 aa)). Asn76 carries N-linked (GlcNAc...) asparagine glycosylation. Residue Asp91 is part of the active site. An N-linked (GlcNAc...) asparagine glycan is attached at Asn136. Residue Asp290 is part of the active site. N-linked (GlcNAc...) asparagine glycosylation occurs at Asn413. The disordered stretch occupies residues 447–470 (ATGLPGVETGVPGSRPPSSKAAGQ). Ala467 carries the GPI-anchor amidated alanine lipid modification. Positions 468 to 495 (AGQAKRPDFVLGVAAVGLAGAGMLFAAM) are cleaved as a propeptide — removed in mature form.

Belongs to the peptidase A1 family.

It localises to the cell membrane. Functionally, probable GPI-anchored aspartic-type endopeptidase which contributes to virulence. In Arthroderma benhamiae (strain ATCC MYA-4681 / CBS 112371) (Trichophyton mentagrophytes), this protein is Probable aspartic-type endopeptidase OPSB (OPSB).